We begin with the raw amino-acid sequence, 948 residues long: Valine--tRNA ligase (948 aa).

The short motif at 40–50 is the 'HIGH' region element; it reads PNVTGSLHMGH. The 'KMSKS' region motif lies at 551 to 555; that stretch reads KMSKS. Lys554 contacts ATP. The stretch at 879-947 forms a coiled coil; the sequence is LIDKGAELAR…LAEQHARISS (69 aa).

This sequence belongs to the class-I aminoacyl-tRNA synthetase family. ValS type 1 subfamily. As to quaternary structure, monomer.

The protein resides in the cytoplasm. The catalysed reaction is tRNA(Val) + L-valine + ATP = L-valyl-tRNA(Val) + AMP + diphosphate. Catalyzes the attachment of valine to tRNA(Val). As ValRS can inadvertently accommodate and process structurally similar amino acids such as threonine, to avoid such errors, it has a 'posttransfer' editing activity that hydrolyzes mischarged Thr-tRNA(Val) in a tRNA-dependent manner. This chain is Valine--tRNA ligase, found in Pseudomonas fluorescens (strain ATCC BAA-477 / NRRL B-23932 / Pf-5).